Consider the following 259-residue polypeptide: Eukaryotic translation initiation factor 3 subunit J (259 aa).

The span at 1 to 12 shows a compositional bias: low complexity; sequence MAAAAAAAAGDS. A sufficient for interaction with EIF3B region spans residues 1 to 70; it reads MAAAAAAAAG…KEEAEVKPEV (70 aa). The segment at 1–111 is disordered; the sequence is MAAAAAAAAG…EPEEPKVLTP (111 aa). Residues Ser-12, Ser-14, and Ser-21 each carry the phosphoserine modification. Acidic residues predominate over residues 41–60; sequence EGEDEDEDVKDNWDDDDDEK. Residues 61–107 are compositionally biased toward basic and acidic residues; it reads KEEAEVKPEVKISEKKKIAEKIKEKERQQKKRQEEIKKRLEEPEEPK. A coiled-coil region spans residues 71–136; the sequence is KISEKKKIAE…ESDLELAKET (66 aa). Lys-107 is covalently cross-linked (Glycyl lysine isopeptide (Lys-Gly) (interchain with G-Cter in SUMO2)). Phosphothreonine is present on Thr-110. Position 128 is a phosphoserine (Ser-128). A disordered region spans residues 218-247; sequence SKAKKKKKGVVPGGGLKATMKDDLADYGGY. The segment at 244–259 is promotes stable association with the 40S ribosome; sequence YGGYDGGYVQDYEDFM. Tyr-255 is subject to Phosphotyrosine.

Belongs to the eIF-3 subunit J family. In terms of assembly, component of the eukaryotic translation initiation factor 3 (eIF-3) complex, which is composed of 13 subunits: EIF3A, EIF3B, EIF3C, EIF3D, EIF3E, EIF3F, EIF3G, EIF3H, EIF3I, EIF3J, EIF3K, EIF3L and EIF3M. The eIF-3 complex appears to include 3 stable modules: module A is composed of EIF3A, EIF3B, EIF3G and EIF3I; module B is composed of EIF3F, EIF3H, and EIF3M; and module C is composed of EIF3C, EIF3D, EIF3E, EIF3K and EIF3L. EIF3C of module C binds EIF3B of module A and EIF3H of module B, thereby linking the three modules. EIF3J is a labile subunit that binds to the eIF-3 complex via EIF3B. The eIF-3 complex interacts with RPS6KB1 under conditions of nutrient depletion. Mitogenic stimulation leads to binding and activation of a complex composed of MTOR and RPTOR, leading to phosphorylation and release of RPS6KB1 and binding of EIF4B to eIF-3. Phosphorylated. Phosphorylation is enhanced upon serum stimulation.

Its subcellular location is the cytoplasm. Component of the eukaryotic translation initiation factor 3 (eIF-3) complex, which is required for several steps in the initiation of protein synthesis. The eIF-3 complex associates with the 40S ribosome and facilitates the recruitment of eIF-1, eIF-1A, eIF-2:GTP:methionyl-tRNAi and eIF-5 to form the 43S pre-initiation complex (43S PIC). The eIF-3 complex stimulates mRNA recruitment to the 43S PIC and scanning of the mRNA for AUG recognition. The eIF-3 complex is also required for disassembly and recycling of post-termination ribosomal complexes and subsequently prevents premature joining of the 40S and 60S ribosomal subunits prior to initiation. The eIF-3 complex specifically targets and initiates translation of a subset of mRNAs involved in cell proliferation, including cell cycling, differentiation and apoptosis, and uses different modes of RNA stem-loop binding to exert either translational activation or repression. This subunit binds directly within the mRNA entry channel of the 40S ribosome to the aminoacyl (A) site. It may regulate the interaction between the 43S PIC and mRNA. The protein is Eukaryotic translation initiation factor 3 subunit J of Pongo abelii (Sumatran orangutan).